Reading from the N-terminus, the 129-residue chain is Insulin-like growth factor 2 (129 aa).

An N-terminal signal peptide occupies residues 1–24; sequence MGVPMGKSLLAPLTFLALASCCFA. The b stretch occupies residues 25-52; the sequence is AYRPSETLCGGELVDTLQFVCGDRGFYF. 3 cysteine pairs are disulfide-bonded: Cys33–Cys72, Cys45–Cys85, and Cys71–Cys76. Positions 53-65 are c; that stretch reads SRPASRVSRRSSR. Residues 66-86 are a; the sequence is GIVEECCFRSCDLALLETYCA. Residues 87 to 92 are d; the sequence is TPAKSE. A propeptide spans 93–129 (e peptide); that stretch reads RDVSTPPTVLPDNFPRYPVGKFFQYDTWKQSAQRLRR.

This sequence belongs to the insulin family. In terms of assembly, interacts with MYORG; this interaction is required for IGF2 secretion. Interacts with integrins ITGAV:ITGB3 and ITGA6:ITGB4; integrin-binding is required for IGF2 signaling. In terms of processing, proteolytically processed by PCSK4, proIGF2 is cleaved at Arg-129 and Arg-92 to generate big-IGF2 and mature IGF2.

It is found in the secreted. Its function is as follows. The insulin-like growth factors possess growth-promoting activity. Major fetal growth hormone in mammals. Plays a key role in regulating fetoplacental development. IGF2 is influenced by placental lactogen. Also involved in tissue differentiation. In adults, involved in glucose metabolism in adipose tissue, skeletal muscle and liver. Acts as a ligand for integrin which is required for IGF2 signaling. Positively regulates myogenic transcription factor MYOD1 function by facilitating the recruitment of transcriptional coactivators, thereby controlling muscle terminal differentiation. Inhibits myoblast differentiation and modulates metabolism via increasing the mitochondrial respiration rate. Functionally, preptin undergoes glucose-mediated co-secretion with insulin, and acts as a physiological amplifier of glucose-mediated insulin secretion. Exhibits osteogenic properties by increasing osteoblast mitogenic activity through phosphoactivation of MAPK1 and MAPK3. The chain is Insulin-like growth factor 2 from Neovison vison (American mink).